Here is a 774-residue protein sequence, read N- to C-terminus: MSGTASLVHTLPASGDSNHRGLHSLKNSRRAADNEPLLRFREAKKVLGDVYGELKDNVAELEGVYKDIKENDFVSSEQREEIEAIGDSIKTIMDTFQRDNMKVVFFGRTSNGKSTTINAMLHEKVLPQGMGHTTCCFLQVEGSEGEVGHLQLDDNPQKIDMKMLGKIGHALSDENSDLPAMGQDSLLKVFHPKKSESGECRLLQNDVVILDSPGVDLSPEFDSWIDKHCLDADVFVLVSNAESTLTQAEKNFFLRVAKKLSKPNVFILNNRWDASAAETENIEDVKKQHLTRFRQFLVDELEVCSEREVNDRIFFVSSREVLESRLKARGLVQKAYQAEGHGTRALEFQNFERHFEHCISRSAIHTKFEAHNRRAHEMIGKMRLNLNSVLTSAAEQRSKLQNNLNESTRTFNECRVNFTQFEKAYREQTEQLRAEVHLKVSADFFEEIARLDAIIDRFEQPFDGSSSGMTKYKEDLAIFVDKCLSSDLEARCTGGLMSRIWNLENDMFQYVTKILAEPYQNKLEEVWRYRAPFKFSICVDVPALVNDFHEDLEFRFTFGLHAIIRRIIAYRSGQPVTAINTNLLTPLSLKQQSEKNSVRDAEASAASEEQAMMTQMVLTSAAFLANGSLGVLVVGGIVYKAVGWRVIAVGGAAYAGLYAWERMRWNSGAKEQHLKEQFRSHLAARMQQVSTAHTHHCETQAIREMDQVFDGLKATVGGVHREMKNDLDVQKTQIDAVDSTIRTLGTIKGKAVFLLRNLEQFASSYLRSDSPPTP.

The disordered stretch occupies residues M1–R29. Topologically, residues M1–V617 are cytoplasmic. The span at R20–R29 shows a compositional bias: basic residues. A coiled-coil region spans residues Y51–N71. Residues Q97–E352 form the Dynamin-type G domain. The segment at G107–S114 is G1 motif. S110–T115 contributes to the GTP binding site. Residues T133–T134 form a G2 motif region. Residues D211–G214 are G3 motif. N270–D273 is a binding site for GTP. Residues N270–D273 are G4 motif. Residue E300 is a region of interest, G5 motif. Residue S317 coordinates GTP. The stretch at N385–R415 forms a coiled coil. A helical transmembrane segment spans residues L618–V638. At Y639–K640 the chain is on the mitochondrial intermembrane side. The chain crosses the membrane as a helical span at residues A641 to E661. At R662–P774 the chain is on the cytoplasmic side.

The protein belongs to the TRAFAC class dynamin-like GTPase superfamily. Dynamin/Fzo/YdjA family. Mitofusin subfamily. Interacts with ced-9; interaction may be suppressed by interaction of ced-9 with egl-1.

The protein resides in the mitochondrion outer membrane. It catalyses the reaction GTP + H2O = GDP + phosphate + H(+). Its function is as follows. Probable transmembrane GTPase. Mediates mitochondrial fusion. Fusion of mitochondria occurs in many cell types and constitutes an important step in mitochondria morphology, which is balanced between fusion and fission. Dispensable for normal apoptotic processes during embryonic development. In Caenorhabditis elegans, this protein is Transmembrane GTPase fzo-1.